A 472-amino-acid chain; its full sequence is NADH-quinone oxidoreductase subunit N 2 (472 aa).

Helical transmembrane passes span 3-23 (WMSFAPELITLTSALWFLLLS), 34-54 (HVAALVLSALGLAACLASVGA), 67-87 (LFSQVFKVLLAAGLFLIVTLC), 106-126 (FVCTLAMMLLVGANHFLVVFI), 156-176 (FLVGIFASGVMIFGLALLYGA), 198-218 (VVIGLLLTLSGFFFKLAVFPF), 233-253 (VSAYIATASKVAAIGVLVRVI), 263-283 (LVHVLAVLSVVSMTVGNLAAI), 291-311 (LLAYSTVAHAGYVLIGVLSMN), 317-337 (AAVFYAFALLVMKFTAFLVLV), 360-380 (ILALALMVSLFSLAGIPPTVG), 398-418 (TLVLIAMINVVISLYYYLLVI), and 441-461 (LLSGVLVIAMVAAGFFPNQII).

It belongs to the complex I subunit 2 family. NDH-1 is composed of 14 different subunits. Subunits NuoA, H, J, K, L, M, N constitute the membrane sector of the complex.

It localises to the cell inner membrane. The enzyme catalyses a quinone + NADH + 5 H(+)(in) = a quinol + NAD(+) + 4 H(+)(out). NDH-1 shuttles electrons from NADH, via FMN and iron-sulfur (Fe-S) centers, to quinones in the respiratory chain. The immediate electron acceptor for the enzyme in this species is believed to be ubiquinone. Couples the redox reaction to proton translocation (for every two electrons transferred, four hydrogen ions are translocated across the cytoplasmic membrane), and thus conserves the redox energy in a proton gradient. This chain is NADH-quinone oxidoreductase subunit N 2, found in Syntrophobacter fumaroxidans (strain DSM 10017 / MPOB).